The chain runs to 508 residues: Photosystem II CP47 reaction center protein (508 aa).

6 helical membrane passes run 21-36 (AVHL…WAGS), 101-115 (IVLS…IWHW), 140-156 (GIHL…FGAF), 203-218 (IAAG…FHLS), 237-252 (VLSS…AFVV), and 457-472 (TFAL…HGAR).

It belongs to the PsbB/PsbC family. PsbB subfamily. As to quaternary structure, PSII is composed of 1 copy each of membrane proteins PsbA, PsbB, PsbC, PsbD, PsbE, PsbF, PsbH, PsbI, PsbJ, PsbK, PsbL, PsbM, PsbT, PsbX, PsbY, PsbZ, Psb30/Ycf12, at least 3 peripheral proteins of the oxygen-evolving complex and a large number of cofactors. It forms dimeric complexes. Requires Binds multiple chlorophylls. PSII binds additional chlorophylls, carotenoids and specific lipids. as cofactor.

The protein localises to the plastid. It is found in the chloroplast thylakoid membrane. Functionally, one of the components of the core complex of photosystem II (PSII). It binds chlorophyll and helps catalyze the primary light-induced photochemical processes of PSII. PSII is a light-driven water:plastoquinone oxidoreductase, using light energy to abstract electrons from H(2)O, generating O(2) and a proton gradient subsequently used for ATP formation. The chain is Photosystem II CP47 reaction center protein from Anthoceros angustus (Hornwort).